A 192-amino-acid polypeptide reads, in one-letter code: Elongation factor P (192 aa).

This sequence belongs to the elongation factor P family.

It is found in the cytoplasm. Its pathway is protein biosynthesis; polypeptide chain elongation. Functionally, involved in peptide bond synthesis. Stimulates efficient translation and peptide-bond synthesis on native or reconstituted 70S ribosomes in vitro. Probably functions indirectly by altering the affinity of the ribosome for aminoacyl-tRNA, thus increasing their reactivity as acceptors for peptidyl transferase. This Borrelia turicatae (strain 91E135) protein is Elongation factor P.